The sequence spans 283 residues: Small ribosomal subunit protein uS2 (283 aa).

The interval 229 to 283 (RSAGKSGEQPAEAEPMPDWERELLEGDGAKTEAKAEEPKAEAKKADEAPEAEKSN) is disordered. A compositionally biased stretch (basic and acidic residues) spans 246 to 283 (DWERELLEGDGAKTEAKAEEPKAEAKKADEAPEAEKSN).

This sequence belongs to the universal ribosomal protein uS2 family.

The protein is Small ribosomal subunit protein uS2 of Cutibacterium acnes (strain DSM 16379 / KPA171202) (Propionibacterium acnes).